A 465-amino-acid polypeptide reads, in one-letter code: Serine carboxypeptidase 24 (465 aa).

The N-terminal stretch at 1–24 (MARTHFIFLLLVALLSTTFPSSSS) is a signal peptide. N-linked (GlcNAc...) asparagine glycosylation is found at Asn54, Asn105, and Asn139. Intrachain disulfides connect Cys88–Cys349, Cys249–Cys260, and Cys285–Cys317. Residue Ser181 is part of the active site. N-linked (GlcNAc...) asparagine glycans are attached at residues Asn250, Asn293, and Asn338. Positions 287–316 (AAQQKKNTTGFFVRMKNTLLRRRLVSGYDP) are cleaved as a propeptide — linker peptide. Residues Asp386 and His438 contribute to the active site.

This sequence belongs to the peptidase S10 family. In terms of assembly, heterodimer. Post-translationally, N-glycosylated. Expressed in shoots, leaves, cauline leaves, siliques and flowers. Expressed a low levels in roots and stems.

It localises to the secreted. Its subcellular location is the extracellular space. The catalysed reaction is Preferential release of a C-terminal arginine or lysine residue.. Completely inhibited by phenylmethylsulfonyl fluoride (PMSF) and partially by leupeptin. In terms of biological role, active serine carboxypeptidase with broad substrate preference, including basic and hydrophilic groups. Processes a protein involved in an early event in the brassinosteroid signaling pathway. This chain is Serine carboxypeptidase 24 (SCPL24), found in Arabidopsis thaliana (Mouse-ear cress).